The chain runs to 726 residues: MMKDTFKNVLSFEFWQKFGKALMVVIAVMPAAGLMISIGKSIVMINPTFAPLVITGGILEQIGWGVIGNLHILFALAIGGSWAKERAGGAFAAGLAFILINRITGTIFGVSGDMLKNPDAMVTTFFGGSIKVADYFISVLEAPALNMGVFVGIISGFVGATAYNKYYNFRKLPDALSFFNGKRFVPFVVILRSAIAAILLAAFWPVVQTGINNFGIWIANSQETAPILAPFLYGTLERLLLPFGLHHMLTIPMNYTALGGTYDILTGAAKGTQVFGQDPLWLAWVTDLVNLKGTDASQYQHLLDTVHPARFKVGQMIGSFGILMGVIVAIYRNVDADKKHKYKGMMIATALATFLTGVTEPIEYMFMFIATPMYLVYSLVQGAAFAMADVVNLRMHSFGSIEFLTRTPIAISAGIGMDIVNFVWVTVLFAVIMYFIANFMIQKFNYATPGRNGNYETAEGSEETSSEVKVAAGSQAVNIINLLGGRVNIVDVDACMTRLRVTVKDADKVGNAEQWKAEGAMGLVMKGQGVQAIYGPKADILKSDIQDILDSGEIIPETLPSQMTEAQQNTVHFKDLTEEVYSVADGQVVALEQVKDPVFAQKMMGDGFAVEPANGNIVSPVSGTVSSIFPTKHAFGIVTEAGLEVLVHIGLDTVSLEGKPFTVHVAEGQKVAAGDLLVTADLDAIRAAGRETSTVVVFTNGDAIKSVKLEKTGSLAAKTAVAKVEL.

Residues 1–453 (MMKDTFKNVL…FNYATPGRNG (453 aa)) enclose the PTS EIIC type-1 domain. Transmembrane regions (helical) follow at residues 18–38 (FGKA…MISI), 62–82 (IGWG…GGSW), 90–110 (AFAA…IFGV), 139–159 (VLEA…GFVG), 184–204 (FVPF…AAFW), 311–331 (FKVG…VAIY), 344–364 (GMMI…PIEY), 365–385 (MFMF…GAAF), and 419–439 (IVNF…IANF). Residues 473-555 (GSQAVNIINL…QDILDSGEII (83 aa)) enclose the PTS EIIB type-1 domain. Cys-495 serves as the catalytic Phosphocysteine intermediate; for EIIB activity. A PTS EIIA type-1 domain is found at 596 to 700 (DPVFAQKMMG…ETSTVVVFTN (105 aa)). His-648 serves as the catalytic Tele-phosphohistidine intermediate; for EIIA activity.

Its subcellular location is the cell membrane. It catalyses the reaction N(pros)-phospho-L-histidyl-[protein] + D-glucose(out) = D-glucose 6-phosphate(in) + L-histidyl-[protein]. In terms of biological role, the phosphoenolpyruvate-dependent sugar phosphotransferase system (sugar PTS), a major carbohydrate active transport system, catalyzes the phosphorylation of incoming sugar substrates concomitantly with their translocation across the cell membrane. This system is involved in glucose transport. The polypeptide is PTS system glucose-specific EIICBA component (exp5) (Streptococcus pneumoniae serotype 4 (strain ATCC BAA-334 / TIGR4)).